The chain runs to 386 residues: Peroxisomal membrane protein PEX13 (386 aa).

The segment at 1 to 76 is disordered; sequence MSSTAVPRPK…SSGTYGESNT (76 aa). Topologically, residues 1–263 are lumenal; sequence MSSTAVPRPK…KATRRKISWK (263 aa). Over residues 23–39 the composition is skewed to polar residues; that stretch reads RNAQSLSAMMTSNQQDS. A compositionally biased stretch (low complexity) spans 44-55; the sequence is ESNNSNSASESA. Residues 65–76 show a composition bias toward polar residues; the sequence is LNSSGTYGESNT. A helical membrane pass occupies residues 264–280; sequence PLLFFLMAVFGFPYLLN. Topologically, residues 281 to 386 are cytoplasmic; it reads KFITKLQTSG…EHVDDETRTH (106 aa). The 67-residue stretch at 306 to 372 folds into the SH3 domain; that stretch reads SKLEFARALY…PYNYIEIIKR (67 aa).

It belongs to the peroxin-13 family. As to quaternary structure, interacts (via SH3 domain) with PEX14 (via SH3-binding motif); forming the PEX13-PEX14 docking complex.

Its subcellular location is the peroxisome membrane. Component of the PEX13-PEX14 docking complex, a translocon channel that specifically mediates the import of peroxisomal cargo proteins bound to PEX5 or PEX21 receptors. The PEX13-PEX14 docking complex forms a large import pore which can be opened to a diameter of about 9 nm. Mechanistically, PEX5 (or PEX21) receptor along with cargo proteins associates with the PEX14 subunit of the PEX13-PEX14 docking complex in the cytosol, leading to the insertion of the receptor into the organelle membrane with the concomitant translocation of the cargo into the peroxisome matrix. In Saccharomyces cerevisiae (strain ATCC 204508 / S288c) (Baker's yeast), this protein is Peroxisomal membrane protein PEX13.